A 197-amino-acid chain; its full sequence is RNA pyrophosphohydrolase (197 aa).

The 144-residue stretch at 6–149 (GYRPNVGIVI…KRDVYRRAMK (144 aa)) folds into the Nudix hydrolase domain. The short motif at 38-59 (GGINEGETPEQAMFRELFEEVG) is the Nudix box element. Positions 170–197 (ETKKAETGKKQPYYHKYAPQNKKGRKRR) are disordered.

This sequence belongs to the Nudix hydrolase family. RppH subfamily. Requires a divalent metal cation as cofactor.

In terms of biological role, accelerates the degradation of transcripts by removing pyrophosphate from the 5'-end of triphosphorylated RNA, leading to a more labile monophosphorylated state that can stimulate subsequent ribonuclease cleavage. In Actinobacillus succinogenes (strain ATCC 55618 / DSM 22257 / CCUG 43843 / 130Z), this protein is RNA pyrophosphohydrolase.